The chain runs to 880 residues: Alanine--tRNA ligase (880 aa).

Residues His-558, His-562, Cys-663, and His-667 each contribute to the Zn(2+) site.

It belongs to the class-II aminoacyl-tRNA synthetase family. Zn(2+) is required as a cofactor.

It localises to the cytoplasm. The catalysed reaction is tRNA(Ala) + L-alanine + ATP = L-alanyl-tRNA(Ala) + AMP + diphosphate. Its function is as follows. Catalyzes the attachment of alanine to tRNA(Ala) in a two-step reaction: alanine is first activated by ATP to form Ala-AMP and then transferred to the acceptor end of tRNA(Ala). Also edits incorrectly charged Ser-tRNA(Ala) and Gly-tRNA(Ala) via its editing domain. This is Alanine--tRNA ligase from Mycoplasmopsis agalactiae (strain NCTC 10123 / CIP 59.7 / PG2) (Mycoplasma agalactiae).